Reading from the N-terminus, the 653-residue chain is MAAEMDWDKTVGAAEDVRRIFEHIPAILVGLEGPDHRFVAVNAAYRGFSPLLDTVGQPAREVYPELEGQQIYEMLDRVYQTGEPQSGSEWRLQTDYDGSGVEERYFDFVVTPRRRADGSIEGVQLIVDDVTSRVRARQAAEARVEELSERYRNVRDSATVMQQALLAASVPVVPGADIAAEYLVAAEDTAAGGDWFDALALGDRLVLVVGDVVGHGVEAAAVMSQLRTALRMQISAGYTVVEALEAVDRFHKQVPGSKSATMCVGSLDFTSGEFQYCTAGHPPPLLVTADASARYVEPTGAGPLGSGTGFPVRSEVLNIGDAILFYTDGLIERPGRPLEASTAEFADLAASIASGSGGFVLDAPARPIDRLCSDTLELLLRSTGYNDDVTLLAMQRRAPTPPLHITLDATINAARTVRAQLREWLAEIGADHSDIADIVHAISEFVENAVEHGYATDVSKGIVVEAALAGDGNVRASVIDRGQWKDHRDGARGRGRGLAMAEALVSEARIMHGAGGTTATLTHRLSRPARFVTDTMVRRAAFQQTIDSEFVSLVESGRIVVRGDVDSTTAATLDRQIAVESRSGIAPVTIDLSAVTHLGSAGVGALAAACDRARKQGTECVLVAPPGSPAHHVLSLVQLPVVGADTEDIFAQE.

The PAC domain maps to 86-142; the sequence is SGSEWRLQTDYDGSGVEERYFDFVVTPRRRADGSIEGVQLIVDDVTSRVRARQAAEA. One can recognise a PPM-type phosphatase domain in the interval 177-396; that stretch reads DIAAEYLVAA…DDVTLLAMQR (220 aa). 4 residues coordinate Mn(2+): Asp-211, Val-212, Asp-328, and Asp-387. The tract at residues 397 to 544 is anti-sigma factor kinase region; it reads RAPTPPLHIT…TMVRRAAFQQ (148 aa). One can recognise an STAS domain in the interval 546-653; that stretch reads IDSEFVSLVE…ADTEDIFAQE (108 aa). Ser-600 is subject to Phosphoserine.

It depends on Mg(2+) as a cofactor. Mn(2+) is required as a cofactor. Autophosphorylated.

The enzyme catalyses O-phospho-L-seryl-[protein] + H2O = L-seryl-[protein] + phosphate. It catalyses the reaction O-phospho-L-threonyl-[protein] + H2O = L-threonyl-[protein] + phosphate. It carries out the reaction L-seryl-[protein] + ATP = O-phospho-L-seryl-[protein] + ADP + H(+). The catalysed reaction is L-threonyl-[protein] + ATP = O-phospho-L-threonyl-[protein] + ADP + H(+). Primarily acts as an independent SigF regulator that is sensitive to the osmosensory signal, mediating the cross talk of PknD with the SigF regulon. Possesses both phosphatase and kinase activities. The kinase domain functions as a classic anti-sigma factor-like kinase to phosphorylate the anti-anti-sigma factor domain at the canonical regulatory site, and the phosphatase domain antagonizes this activity. This chain is Multidomain regulatory protein MT1410, found in Mycobacterium tuberculosis (strain CDC 1551 / Oshkosh).